A 264-amino-acid polypeptide reads, in one-letter code: Meiotically up-regulated gene 162 protein (264 aa).

7 consecutive transmembrane segments (helical) span residues 18 to 38, 54 to 74, 84 to 104, 140 to 160, 174 to 194, 199 to 219, and 223 to 243; these read IVIFFDILIILLGYIGTWNLK, LWIYIRGTVLCADCIFTAGSA, VFQVSSLMFYGLMMEFFGYSF, IISIIEIPIKLHFILNVLLFL, HLSYHLFALWVINLYIWIKLI, FVLGFLAGLSVLLLNTGSLIT, and LISYFNLLTSCLIIFPSIWIY.

It is found in the endoplasmic reticulum membrane. Functionally, has a role in meiosis. The chain is Meiotically up-regulated gene 162 protein (mug162) from Schizosaccharomyces pombe (strain 972 / ATCC 24843) (Fission yeast).